The sequence spans 475 residues: ATP synthase subunit beta, chloroplastic (475 aa).

155–162 (GGAGVGKT) is an ATP binding site.

This sequence belongs to the ATPase alpha/beta chains family. F-type ATPases have 2 components, CF(1) - the catalytic core - and CF(0) - the membrane proton channel. CF(1) has five subunits: alpha(3), beta(3), gamma(1), delta(1), epsilon(1). CF(0) has four main subunits: a(1), b(1), b'(1) and c(9-12).

It is found in the plastid. The protein resides in the chloroplast thylakoid membrane. It carries out the reaction ATP + H2O + 4 H(+)(in) = ADP + phosphate + 5 H(+)(out). In terms of biological role, produces ATP from ADP in the presence of a proton gradient across the membrane. The catalytic sites are hosted primarily by the beta subunits. This chain is ATP synthase subunit beta, chloroplastic, found in Pyropia yezoensis (Susabi-nori).